An 89-amino-acid chain; its full sequence is Small ribosomal subunit protein uS14 (89 aa).

This sequence belongs to the universal ribosomal protein uS14 family. In terms of assembly, part of the 30S ribosomal subunit. Contacts proteins S3 and S10.

Functionally, binds 16S rRNA, required for the assembly of 30S particles and may also be responsible for determining the conformation of the 16S rRNA at the A site. This is Small ribosomal subunit protein uS14 from Chlorobaculum tepidum (strain ATCC 49652 / DSM 12025 / NBRC 103806 / TLS) (Chlorobium tepidum).